The primary structure comprises 592 residues: MEGKWLLCMLLVLGTAIVEAHDGHDDDVIDIEDDLDDVIEEVEDSKPDTTAPPSSPKVTYKAPVPTGEVYFADSFDRGTLSGWILSKAKKDDTDDEIAKYDGKWEVEEMKESKLPGDKGLVLMSRAKHHAISAKLNKPFLFDTKPLIVQYEVNFQNGIECGGAYVKLLSKTPELNLDQFHDKTPYTIMFGPDKCGEDYKLHFIFRHKNPKTGIYEEKHAKRPDADLKTYFTDKKTHLYTLILNPDNSFEILVDQSVVNSGNLLNDMTPPVNPSREIEDPEDRKPEDWDERPKIPDPEAVKPDDWDEDAPAKIPDEEATKPEGWLDDEPEYVPDPDAEKPEDWDEDMDGEWEAPQIANPRCESAPGCGVWQRPVIDNPNYKGKWKPPMIDNPSYQGIWKPRKIPNPDFFEDLEPFRMTPFSAIGLELWSMTSDIFFDNFIICADRRIVDDWANDGWGLKKAADGAAEPGVVGQMIEAAEERPWLWVVYILTVALPVFLVILFCCSGKKQTSGMEYKKTDAPQPDVKEEEEEKEEEKDKGDEEEEGEEKLEEKQKSDAEEDGGTVSQEEEDRKPKAEEDEILNRSPRNRKPRRE.

The signal sequence occupies residues 1–20; it reads MEGKWLLCMLLVLGTAIVEA. Residues 21-481 lie on the Lumenal side of the membrane; that stretch reads HDGHDDDVID…QMIEAAEERP (461 aa). Ca(2+)-binding residues include Ser74 and Asp117. Lys137 bears the N6-acetyllysine mark. A disulfide bond links Cys160 and Cys194. An alpha-D-glucoside is bound by residues Tyr164, Lys166, Tyr185, and Asp192. Positions 260–345 are disordered; sequence GNLLNDMTPP…AEKPEDWDED (86 aa). Residues 274–319 are compositionally biased toward basic and acidic residues; sequence REIEDPEDRKPEDWDERPKIPDPEAVKPDDWDEDAPAKIPDEEATK. Positions 276–409 are p domain (Extended arm); that stretch reads IEDPEDRKPE…RKIPNPDFFE (134 aa). Tandem repeats lie at residues 278-290, 295-307, 314-326, 333-345, and 348-358. 2 4 X approximate repeats regions span residues 278–345 and 348–405; these read DPED…WDED and GEWE…IPNP. Residues 323-345 show a composition bias toward acidic residues; sequence WLDDEPEYVPDPDAEKPEDWDED. Positions 326–359 are interaction with PPIB; that stretch reads DEPEYVPDPDAEKPEDWDEDMDGEWEAPQIANPR. The cysteines at positions 360 and 366 are disulfide-linked. A run of 3 repeats spans residues 367 to 377, 381 to 391, and 395 to 405. An alpha-D-glucoside is bound at residue Glu425. Asp436 is a binding site for Ca(2+). Residues 482–502 form a helical membrane-spanning segment; sequence WLWVVYILTVALPVFLVILFC. S-palmitoyl cysteine attachment occurs at residues Cys502 and Cys503. Residues 503 to 592 lie on the Cytoplasmic side of the membrane; it reads CSGKKQTSGM…SPRNRKPRRE (90 aa). Positions 503 to 592 are sufficient to mediate interaction with SGIP1; it reads CSGKKQTSGM…SPRNRKPRRE (90 aa). Residues 511-592 are disordered; that stretch reads GMEYKKTDAP…SPRNRKPRRE (82 aa). Residues 525 to 547 show a composition bias toward acidic residues; it reads KEEEEEKEEEKDKGDEEEEGEEK. Ser554 is subject to Phosphoserine. Phosphothreonine is present on Thr562. Position 564 is a phosphoserine; by MAPK3 (Ser564). The residue at position 583 (Ser583) is a Phosphoserine.

It belongs to the calreticulin family. As to quaternary structure, interacts with MAPK3/ERK1. Interacts with KCNH2. Associates with ribosomes. Interacts with SGIP1; involved in negative regulation of endocytosis. The palmitoylated form interacts with the ribosome-translocon complex component SSR1, promoting efficient folding of glycoproteins. Interacts with SERPINA2P/SERPINA2 and with the S and Z variants of SERPINA1. Interacts with PPIB. Interacts with ZNRF4. Interacts with SMIM22. Interacts with TMX2. Interacts with TMEM35A/NACHO. Interacts with CHRNA7. Interacts with reticulophagy regulators RETREG2 and RETREG3. Interacts with DNM1L; may form part of a larger protein complex at the ER-mitochondrial interface during mitochondrial fission. Interacts with ADAM7. (Microbial infection) Interacts with HBV large envelope protein, isoform L. In terms of assembly, (Microbial infection) Interacts with HBV large envelope protein, isoform M; this association may be essential for isoform M proper secretion. Post-translationally, phosphorylated at Ser-564 by MAPK3/ERK1. Phosphorylation by MAPK3/ERK1 increases its association with ribosomes. Palmitoylation by DHHC6 leads to the preferential localization to the perinuclear rough ER. It mediates the association of calnexin with the ribosome-translocon complex (RTC) which is required for efficient folding of glycosylated proteins. In terms of processing, ubiquitinated, leading to proteasomal degradation. Probably ubiquitinated by ZNRF4.

It is found in the endoplasmic reticulum membrane. The protein localises to the mitochondrion membrane. Its subcellular location is the melanosome membrane. In terms of biological role, calcium-binding protein that interacts with newly synthesized monoglucosylated glycoproteins in the endoplasmic reticulum. It may act in assisting protein assembly and/or in the retention within the ER of unassembled protein subunits. It seems to play a major role in the quality control apparatus of the ER by the retention of incorrectly folded proteins. Associated with partial T-cell antigen receptor complexes that escape the ER of immature thymocytes, it may function as a signaling complex regulating thymocyte maturation. Additionally it may play a role in receptor-mediated endocytosis at the synapse. In Homo sapiens (Human), this protein is Calnexin (CANX).